The chain runs to 194 residues: Imidazoleglycerol-phosphate dehydratase (194 aa).

It belongs to the imidazoleglycerol-phosphate dehydratase family.

The protein resides in the cytoplasm. The enzyme catalyses D-erythro-1-(imidazol-4-yl)glycerol 3-phosphate = 3-(imidazol-4-yl)-2-oxopropyl phosphate + H2O. It functions in the pathway amino-acid biosynthesis; L-histidine biosynthesis; L-histidine from 5-phospho-alpha-D-ribose 1-diphosphate: step 6/9. This Bacillus cereus (strain AH187) protein is Imidazoleglycerol-phosphate dehydratase.